A 235-amino-acid polypeptide reads, in one-letter code: 7-cyano-7-deazaguanine synthase (235 aa).

Position 12-22 (12-22) interacts with ATP; the sequence is FSGGQDSTTCL. Residues Cys200, Cys215, Cys218, and Cys221 each contribute to the Zn(2+) site.

This sequence belongs to the QueC family. It depends on Zn(2+) as a cofactor.

It carries out the reaction 7-carboxy-7-deazaguanine + NH4(+) + ATP = 7-cyano-7-deazaguanine + ADP + phosphate + H2O + H(+). It participates in purine metabolism; 7-cyano-7-deazaguanine biosynthesis. In terms of biological role, catalyzes the ATP-dependent conversion of 7-carboxy-7-deazaguanine (CDG) to 7-cyano-7-deazaguanine (preQ(0)). In Leptothrix cholodnii (strain ATCC 51168 / LMG 8142 / SP-6) (Leptothrix discophora (strain SP-6)), this protein is 7-cyano-7-deazaguanine synthase.